Consider the following 134-residue polypeptide: Protein NrdI (134 aa).

Belongs to the NrdI family.

Functionally, probably involved in ribonucleotide reductase function. This chain is Protein NrdI, found in Yersinia pseudotuberculosis serotype O:1b (strain IP 31758).